The primary structure comprises 338 residues: 5-dehydro-2-deoxygluconokinase (338 aa).

The protein belongs to the carbohydrate kinase PfkB family.

It carries out the reaction 5-dehydro-2-deoxy-D-gluconate + ATP = 6-phospho-5-dehydro-2-deoxy-D-gluconate + ADP + H(+). It functions in the pathway polyol metabolism; myo-inositol degradation into acetyl-CoA; acetyl-CoA from myo-inositol: step 5/7. Its function is as follows. Catalyzes the phosphorylation of 5-dehydro-2-deoxy-D-gluconate (2-deoxy-5-keto-D-gluconate or DKG) to 6-phospho-5-dehydro-2-deoxy-D-gluconate (DKGP). This chain is 5-dehydro-2-deoxygluconokinase, found in Mesomycoplasma hyopneumoniae (strain 232) (Mycoplasma hyopneumoniae).